The following is a 536-amino-acid chain: Arylsulfatase K (536 aa).

An N-terminal signal peptide occupies residues 1-22; it reads MLLLWVSVVAALALAVLAPGAG. Positions 40 and 80 each coordinate Ca(2+). Cys-80 serves as the catalytic Nucleophile. Cys-80 bears the 3-oxoalanine (Cys) mark. An N-linked (GlcNAc...) asparagine glycan is attached at Asn-108. Lys-128 provides a ligand contact to substrate. N-linked (GlcNAc...) asparagine glycosylation is found at Asn-166 and Asn-193. His-251 lines the substrate pocket. A glycan (N-linked (GlcNAc...) asparagine) is linked at Asn-262. Asp-313 and His-314 together coordinate Ca(2+). N-linked (GlcNAc...) asparagine glycans are attached at residues Asn-375, Asn-413, and Asn-498.

The protein belongs to the sulfatase family. Requires Ca(2+) as cofactor. The conversion to 3-oxoalanine (also known as C-formylglycine, FGly), of a serine or cysteine residue in prokaryotes and of a cysteine residue in eukaryotes, is critical for catalytic activity. Post-translationally, the 75-kDa precursor undergoes proteolytic processing to yield a 23 kDa form. In terms of processing, N-glycosylated with both high mannose and complex type sugars. Expressed at high levels in the placenta and pancreas. Expressed at intermediate levels in the lung, brain, heart, liver and kidney and at low levels in the muscle.

The protein resides in the secreted. It is found in the lysosome. The catalysed reaction is an aryl sulfate + H2O = a phenol + sulfate + H(+). It catalyses the reaction Hydrolysis of the 2-sulfate groups of the 2-O-sulfo-D-glucuronate residues of chondroitin sulfate, heparin and heparitin sulfate.. Catalyzes the hydrolysis of pseudosubstrates such as p-nitrocatechol sulfate and p-nitrophenyl sulfate. Catalyzes the hydrolysis of the 2-sulfate groups of the 2-O-sulfo-D-glucuronate residues of chondroitin sulfate, heparin and heparitin sulfate. Acts selectively on 2-sulfoglucuronate and lacks activity against 2-sulfoiduronate. The sequence is that of Arylsulfatase K (ARSK) from Homo sapiens (Human).